The primary structure comprises 229 residues: Putative N-acetylmannosamine-6-phosphate 2-epimerase (229 aa).

The protein belongs to the NanE family.

It catalyses the reaction an N-acyl-D-glucosamine 6-phosphate = an N-acyl-D-mannosamine 6-phosphate. The protein operates within amino-sugar metabolism; N-acetylneuraminate degradation; D-fructose 6-phosphate from N-acetylneuraminate: step 3/5. Its function is as follows. Converts N-acetylmannosamine-6-phosphate (ManNAc-6-P) to N-acetylglucosamine-6-phosphate (GlcNAc-6-P). The sequence is that of Putative N-acetylmannosamine-6-phosphate 2-epimerase from Escherichia fergusonii (strain ATCC 35469 / DSM 13698 / CCUG 18766 / IAM 14443 / JCM 21226 / LMG 7866 / NBRC 102419 / NCTC 12128 / CDC 0568-73).